Reading from the N-terminus, the 318-residue chain is Pantothenate kinase (318 aa).

96–103 (GSVAVGKS) provides a ligand contact to ATP.

The protein belongs to the prokaryotic pantothenate kinase family.

It is found in the cytoplasm. It catalyses the reaction (R)-pantothenate + ATP = (R)-4'-phosphopantothenate + ADP + H(+). Its pathway is cofactor biosynthesis; coenzyme A biosynthesis; CoA from (R)-pantothenate: step 1/5. This chain is Pantothenate kinase, found in Rhodopseudomonas palustris (strain HaA2).